A 613-amino-acid polypeptide reads, in one-letter code: Alkyldihydroxyacetonephosphate synthase (613 aa).

One can recognise an FAD-binding PCMH-type domain in the interval isoleucine 126 to leucine 307. Residues proline 158–asparagine 164, aspartate 228–threonine 234, alanine 241–serine 244, and glutamate 291–valine 297 each bind FAD. Arginine 437 is a substrate binding site. The Proton donor/acceptor role is filled by tyrosine 498. An important for enzyme activity region spans residues histidine 534–histidine 536. Positions asparagine 572 to arginine 593 are disordered. Residues alanine 611–leucine 613 carry the Microbody targeting signal motif.

This sequence belongs to the FAD-binding oxidoreductase/transferase type 4 family. In terms of assembly, homodimer. It depends on FAD as a cofactor.

The protein resides in the peroxisome. It catalyses the reaction a long chain fatty alcohol + a 1-acylglycerone 3-phosphate = a 1-O-alkylglycerone 3-phosphate + a long-chain fatty acid + H(+). The protein operates within glycerolipid metabolism; ether lipid biosynthesis. Functionally, catalyzes the exchange of an acyl for a long-chain alkyl group and the formation of the ether bond in the biosynthesis of ether phospholipids. This chain is Alkyldihydroxyacetonephosphate synthase, found in Trypanosoma brucei brucei.